The sequence spans 177 residues: ATP synthase subunit delta (177 aa).

It belongs to the ATPase delta chain family. F-type ATPases have 2 components, F(1) - the catalytic core - and F(0) - the membrane proton channel. F(1) has five subunits: alpha(3), beta(3), gamma(1), delta(1), epsilon(1). F(0) has three main subunits: a(1), b(2) and c(10-14). The alpha and beta chains form an alternating ring which encloses part of the gamma chain. F(1) is attached to F(0) by a central stalk formed by the gamma and epsilon chains, while a peripheral stalk is formed by the delta and b chains.

The protein resides in the cell inner membrane. F(1)F(0) ATP synthase produces ATP from ADP in the presence of a proton or sodium gradient. F-type ATPases consist of two structural domains, F(1) containing the extramembraneous catalytic core and F(0) containing the membrane proton channel, linked together by a central stalk and a peripheral stalk. During catalysis, ATP synthesis in the catalytic domain of F(1) is coupled via a rotary mechanism of the central stalk subunits to proton translocation. Its function is as follows. This protein is part of the stalk that links CF(0) to CF(1). It either transmits conformational changes from CF(0) to CF(1) or is implicated in proton conduction. This Shigella boydii serotype 18 (strain CDC 3083-94 / BS512) protein is ATP synthase subunit delta.